We begin with the raw amino-acid sequence, 114 residues long: T cell receptor beta variable 10-2 (114 aa).

A signal peptide spans 1–21 (MGTRLFFYVALCLLWAGHRDA). Positions 22 to 114 (GITQSPRYKI…TSVYFCASSE (93 aa)) constitute an Ig-like domain. Cys-42 and Cys-110 are oxidised to a cystine.

In terms of assembly, alpha-beta TR is a heterodimer composed of an alpha and beta chain; disulfide-linked. The alpha-beta TR is associated with the transmembrane signaling CD3 coreceptor proteins to form the TR-CD3 (TcR or TCR). The assembly of alpha-beta TR heterodimers with CD3 occurs in the endoplasmic reticulum where a single alpha-beta TR heterodimer associates with one CD3D-CD3E heterodimer, one CD3G-CD3E heterodimer and one CD247 homodimer forming a stable octameric structure. CD3D-CD3E and CD3G-CD3E heterodimers preferentially associate with TR alpha and TR beta chains, respectively. The association of the CD247 homodimer is the last step of TcR assembly in the endoplasmic reticulum and is required for transport to the cell surface.

The protein resides in the cell membrane. Its function is as follows. V region of the variable domain of T cell receptor (TR) beta chain that participates in the antigen recognition. Alpha-beta T cell receptors are antigen specific receptors which are essential to the immune response and are present on the cell surface of T lymphocytes. Recognize peptide-major histocompatibility (MH) (pMH) complexes that are displayed by antigen presenting cells (APC), a prerequisite for efficient T cell adaptive immunity against pathogens. Binding of alpha-beta TR to pMH complex initiates TR-CD3 clustering on the cell surface and intracellular activation of LCK that phosphorylates the ITAM motifs of CD3G, CD3D, CD3E and CD247 enabling the recruitment of ZAP70. In turn ZAP70 phosphorylates LAT, which recruits numerous signaling molecules to form the LAT signalosome. The LAT signalosome propagates signal branching to three major signaling pathways, the calcium, the mitogen-activated protein kinase (MAPK) kinase and the nuclear factor NF-kappa-B (NF-kB) pathways, leading to the mobilization of transcription factors that are critical for gene expression and essential for T cell growth and differentiation. The T cell repertoire is generated in the thymus, by V-(D)-J rearrangement. This repertoire is then shaped by intrathymic selection events to generate a peripheral T cell pool of self-MH restricted, non-autoaggressive T cells. Post-thymic interaction of alpha-beta TR with the pMH complexes shapes TR structural and functional avidity. In Homo sapiens (Human), this protein is T cell receptor beta variable 10-2.